Consider the following 709-residue polypeptide: Polyribonucleotide nucleotidyltransferase (709 aa).

2 residues coordinate Mg(2+): Asp489 and Asp495. The 60-residue stretch at 556–615 folds into the KH domain; that stretch reads PKIDMIKIDVDKIKVVIGKGGETIDKIIAETGVKIDIDEEGNVSIFSSDQAAIDRTKDII. The S1 motif domain occupies 625–693; that stretch reads GEVYHAKVVR…DKGRVDASMK (69 aa).

The protein belongs to the polyribonucleotide nucleotidyltransferase family. Mg(2+) serves as cofactor.

The protein resides in the cytoplasm. It catalyses the reaction RNA(n+1) + phosphate = RNA(n) + a ribonucleoside 5'-diphosphate. In terms of biological role, involved in mRNA degradation. Catalyzes the phosphorolysis of single-stranded polyribonucleotides processively in the 3'- to 5'-direction. The sequence is that of Polyribonucleotide nucleotidyltransferase from Streptococcus agalactiae serotype Ia (strain ATCC 27591 / A909 / CDC SS700).